The chain runs to 110 residues: Large ribosomal subunit protein uL24 (110 aa).

This sequence belongs to the universal ribosomal protein uL24 family. Part of the 50S ribosomal subunit.

One of two assembly initiator proteins, it binds directly to the 5'-end of the 23S rRNA, where it nucleates assembly of the 50S subunit. In terms of biological role, one of the proteins that surrounds the polypeptide exit tunnel on the outside of the subunit. The polypeptide is Large ribosomal subunit protein uL24 (Chloroflexus aurantiacus (strain ATCC 29366 / DSM 635 / J-10-fl)).